The sequence spans 608 residues: 1-phosphatidylinositol 4,5-bisphosphate phosphodiesterase zeta-1 (608 aa).

The region spanning 35–70 is the EF-hand domain; the sequence is CSYIHVKQIFKDNDRLKQGRITIEEFRAIYRIITHR. Positions 155 to 299 constitute a PI-PLC X-box domain; sequence QDMTHPLNDY…LKFKILVKNK (145 aa). Catalysis depends on residues His170 and His215. A disordered region spans residues 305–324; sequence KETHERKGSDKRGDNQDKET. Positions 349-465 constitute a PI-PLC Y-box domain; the sequence is LSDLVIYTKA…GYILKPHFLR (117 aa). The region spanning 465 to 589 is the C2 domain; sequence RESKSYFNPS…KGYRRIPLFS (125 aa).

As to quaternary structure, interacts via its C2 domain with PtdIns(3)P and, to a lesser extent, PtdIns(5)P in vitro. It depends on Ca(2+) as a cofactor. In terms of tissue distribution, expressed specifically in testis and sperm. Weakly expressed in pancreatic-duct cells. Up-regulated in pancreatic-duct cells from patients with cystic fibrosis.

The protein localises to the nucleus. It localises to the cytoplasm. It is found in the perinuclear region. The catalysed reaction is a 1,2-diacyl-sn-glycero-3-phospho-(1D-myo-inositol-4,5-bisphosphate) + H2O = 1D-myo-inositol 1,4,5-trisphosphate + a 1,2-diacyl-sn-glycerol + H(+). In terms of biological role, the production of the second messenger molecules diacylglycerol (DAG) and inositol 1,4,5-trisphosphate (IP3) is mediated by activated phosphatidylinositol-specific phospholipase C enzymes. In vitro, hydrolyzes PtdIns(4,5)P2 in a Ca(2+)-dependent manner. Triggers intracellular Ca(2+) oscillations in oocytes solely during M phase and is involved in inducing oocyte activation and initiating embryonic development up to the blastocyst stage. Is therefore a strong candidate for the egg-activating soluble sperm factor that is transferred from the sperm into the egg cytoplasm following gamete membrane fusion. May exert an inhibitory effect on phospholipase-C-coupled processes that depend on calcium ions and protein kinase C, including CFTR trafficking and function. The chain is 1-phosphatidylinositol 4,5-bisphosphate phosphodiesterase zeta-1 from Homo sapiens (Human).